Consider the following 194-residue polypeptide: MIEKSTPAPITHAADADLIGPDKSLLIVDDDTAFLRRLARAMEARGFAVEIAESVAEGIAKAKTRPPKHAVIDLRLGDGSGLDVIEAIRGRRDDTRMIVLTGYGNIATAVNAVKLGALDYLAKPADADDILAALIQRPGERVEPPENPMSADRVRWEHIQRVYEMCERNVSETARRLNMHRRTLQRILAKRAPK.

A Response regulatory domain is found at 24–138; it reads SLLIVDDDTA…DILAALIQRP (115 aa). D73 carries the post-translational modification 4-aspartylphosphate.

In terms of processing, phosphorylated by ActS.

Member of the two-component regulatory system ActS/ActR acting in acid tolerance. These data implicate that a two-component sensor may be involved in pH sensing and/or response. The chain is Acid tolerance regulatory protein ActR (actR) from Sinorhizobium medicae (strain WSM419) (Ensifer medicae).